Consider the following 156-residue polypeptide: ATP synthase subunit b (156 aa).

A helical transmembrane segment spans residues 5–25 (LTLIGQAIAFAFFVAFCMKFV).

The protein belongs to the ATPase B chain family. As to quaternary structure, F-type ATPases have 2 components, F(1) - the catalytic core - and F(0) - the membrane proton channel. F(1) has five subunits: alpha(3), beta(3), gamma(1), delta(1), epsilon(1). F(0) has three main subunits: a(1), b(2) and c(10-14). The alpha and beta chains form an alternating ring which encloses part of the gamma chain. F(1) is attached to F(0) by a central stalk formed by the gamma and epsilon chains, while a peripheral stalk is formed by the delta and b chains.

It localises to the cell inner membrane. F(1)F(0) ATP synthase produces ATP from ADP in the presence of a proton or sodium gradient. F-type ATPases consist of two structural domains, F(1) containing the extramembraneous catalytic core and F(0) containing the membrane proton channel, linked together by a central stalk and a peripheral stalk. During catalysis, ATP synthesis in the catalytic domain of F(1) is coupled via a rotary mechanism of the central stalk subunits to proton translocation. In terms of biological role, component of the F(0) channel, it forms part of the peripheral stalk, linking F(1) to F(0). The chain is ATP synthase subunit b from Acinetobacter baumannii (strain AYE).